The chain runs to 297 residues: Probable endonuclease 4 (297 aa).

Zn(2+) is bound by residues H69, H110, E145, D179, H182, H214, D227, H229, and E259.

The protein belongs to the AP endonuclease 2 family. Zn(2+) is required as a cofactor.

The catalysed reaction is Endonucleolytic cleavage to 5'-phosphooligonucleotide end-products.. In terms of biological role, endonuclease IV plays a role in DNA repair. It cleaves phosphodiester bonds at apurinic or apyrimidinic (AP) sites, generating a 3'-hydroxyl group and a 5'-terminal sugar phosphate. This is Probable endonuclease 4 from Oceanobacillus iheyensis (strain DSM 14371 / CIP 107618 / JCM 11309 / KCTC 3954 / HTE831).